Here is a 478-residue protein sequence, read N- to C-terminus: Trigger factor (478 aa).

A compositionally biased stretch (basic and acidic residues) spans 154–167 (MAKDSRSFEPREEG). Disordered regions lie at residues 154 to 173 (MAKD…AQSG) and 444 to 478 (LFAE…KAAG). The PPIase FKBP-type domain maps to 173 to 258 (GDRVTIDFVG…VKAVAAPGET (86 aa)).

It belongs to the FKBP-type PPIase family. Tig subfamily.

Its subcellular location is the cytoplasm. The enzyme catalyses [protein]-peptidylproline (omega=180) = [protein]-peptidylproline (omega=0). In terms of biological role, involved in protein export. Acts as a chaperone by maintaining the newly synthesized protein in an open conformation. Functions as a peptidyl-prolyl cis-trans isomerase. This Methylorubrum populi (strain ATCC BAA-705 / NCIMB 13946 / BJ001) (Methylobacterium populi) protein is Trigger factor.